Reading from the N-terminus, the 644-residue chain is Biosynthetic arginine decarboxylase (644 aa).

At K105 the chain carries N6-(pyridoxal phosphate)lysine. 287 to 297 is a binding site for substrate; sequence LDVGGGLGIDY.

This sequence belongs to the Orn/Lys/Arg decarboxylase class-II family. SpeA subfamily. It depends on Mg(2+) as a cofactor. Pyridoxal 5'-phosphate is required as a cofactor.

It catalyses the reaction L-arginine + H(+) = agmatine + CO2. In terms of biological role, catalyzes the biosynthesis of agmatine from arginine. The sequence is that of Biosynthetic arginine decarboxylase from Parasynechococcus marenigrum (strain WH8102).